The primary structure comprises 316 residues: Protein lifeguard 2 (316 aa).

The interval 1-53 is disordered; sequence MTQGKLSVANKAPGTEGQQQVHGEKKEAPAVPSAPPSYEEATSGEGMKAGAFP. A run of 3 helical transmembrane segments spans residues 106–126, 138–158, and 165–185; these read VYTI…LFTF, PGWY…LACC, and FPWN…LTGM. N-linked (GlcNAc...) asparagine glycosylation occurs at N191. Transmembrane regions (helical) follow at residues 194–214, 225–245, 250–270, and 290–310; these read SVLL…VFSF, GVLF…AILL, VPWL…LFLA, and IFGA…FLQL.

It belongs to the BI1 family. LFG subfamily. As to quaternary structure, interacts with FAS/TNFRSF6 and BAX. Highly expressed in breast carcinoma tissues. Enhanced expression correlates with the grade of the tumor (grade II/grade III) in primary breast tumors (at protein level). Widely expressed. Expressed at high levels in the brain especially in the hippocampus.

It localises to the cell membrane. It is found in the membrane raft. Its subcellular location is the postsynaptic cell membrane. Its function is as follows. Antiapoptotic protein which protects cells uniquely from Fas-induced apoptosis. Regulates Fas-mediated apoptosis in neurons by interfering with caspase-8 activation. May play a role in cerebellar development by affecting cerebellar size, internal granular layer (IGL) thickness, and Purkinje cell (PC) development. In Homo sapiens (Human), this protein is Protein lifeguard 2 (FAIM2).